A 311-amino-acid polypeptide reads, in one-letter code: Cell division protein ZipA (311 aa).

Residues 1-5 are Periplasmic-facing; that stretch reads MQELR. A helical membrane pass occupies residues 6 to 26; sequence FVLIVVGALAIMALLFHGLWT. Topologically, residues 27–311 are cytoplasmic; the sequence is SKKEGKAKFG…QIVEFKAANA (285 aa). Residues 32–54 show a composition bias toward basic and acidic residues; that stretch reads KAKFGDKPLSKLDLGESEPKESE. The disordered stretch occupies residues 32-60; the sequence is KAKFGDKPLSKLDLGESEPKESEMYVAPE.

It belongs to the ZipA family. As to quaternary structure, interacts with FtsZ via their C-terminal domains.

The protein localises to the cell inner membrane. Essential cell division protein that stabilizes the FtsZ protofilaments by cross-linking them and that serves as a cytoplasmic membrane anchor for the Z ring. Also required for the recruitment to the septal ring of downstream cell division proteins. This is Cell division protein ZipA from Vibrio vulnificus (strain YJ016).